A 122-amino-acid chain; its full sequence is MARIVGVEIPNDKKVEIALTYIYGIGRTRAKQICEATNIDPDKRVRELNDEEISKIATYIQQNFKVEGELRTEVMQNIKRLIDIGCYRGFRHKLGLPVRGQKTKSNARTRKGPRPSRIKKKK.

The segment at 98–122 is disordered; the sequence is VRGQKTKSNARTRKGPRPSRIKKKK. A compositionally biased stretch (basic residues) spans 101–122; that stretch reads QKTKSNARTRKGPRPSRIKKKK.

The protein belongs to the universal ribosomal protein uS13 family. Part of the 30S ribosomal subunit. Forms a loose heterodimer with protein S19. Forms two bridges to the 50S subunit in the 70S ribosome.

Located at the top of the head of the 30S subunit, it contacts several helices of the 16S rRNA. In the 70S ribosome it contacts the 23S rRNA (bridge B1a) and protein L5 of the 50S subunit (bridge B1b), connecting the 2 subunits; these bridges are implicated in subunit movement. Contacts the tRNAs in the A and P-sites. In Thermosipho africanus (strain TCF52B), this protein is Small ribosomal subunit protein uS13.